The primary structure comprises 160 residues: Transcription elongation factor GreA (160 aa).

Belongs to the GreA/GreB family.

Functionally, necessary for efficient RNA polymerase transcription elongation past template-encoded arresting sites. The arresting sites in DNA have the property of trapping a certain fraction of elongating RNA polymerases that pass through, resulting in locked ternary complexes. Cleavage of the nascent transcript by cleavage factors such as GreA or GreB allows the resumption of elongation from the new 3'terminus. GreA releases sequences of 2 to 3 nucleotides. The sequence is that of Transcription elongation factor GreA from Francisella philomiragia subsp. philomiragia (strain ATCC 25017 / CCUG 19701 / FSC 153 / O#319-036).